The following is a 218-amino-acid chain: Adenylate kinase (218 aa).

10 to 15 (GAGKGT) contacts ATP. The tract at residues 30–59 (STGDMLRAAVKAGTPLGLEAKKVMDAGGLV) is NMP. AMP-binding positions include Thr31, Arg36, 57–59 (GLV), 85–88 (GFPR), and Gln92. The tract at residues 122–159 (ERRVHPASGRSYHVRFNPPKAEGVDDVTGEPLVQRDDD) is LID. ATP is bound by residues Arg123 and 132-133 (SY). Arg156 and Arg167 together coordinate AMP. Gly203 contributes to the ATP binding site.

This sequence belongs to the adenylate kinase family. As to quaternary structure, monomer.

The protein resides in the cytoplasm. It catalyses the reaction AMP + ATP = 2 ADP. The protein operates within purine metabolism; AMP biosynthesis via salvage pathway; AMP from ADP: step 1/1. Functionally, catalyzes the reversible transfer of the terminal phosphate group between ATP and AMP. Plays an important role in cellular energy homeostasis and in adenine nucleotide metabolism. This is Adenylate kinase from Bordetella pertussis (strain Tohama I / ATCC BAA-589 / NCTC 13251).